Here is a 245-residue protein sequence, read N- to C-terminus: 8-amino-3,8-dideoxy-manno-octulosonate cytidylyltransferase (245 aa).

The protein belongs to the KdsB family.

It localises to the cytoplasm. The enzyme catalyses 8-amino-3,8-dideoxy-alpha-D-manno-octulosonate + CTP = CMP-8-amino-3,8-dideoxy-alpha-D-manno-oct-2-ulosonate + diphosphate. It participates in bacterial outer membrane biogenesis; lipopolysaccharide biosynthesis. Functionally, activates KDO8N (a required 8-carbon sugar) for incorporation into bacterial lipopolysaccharide in the Shewanella genus. This is 8-amino-3,8-dideoxy-manno-octulosonate cytidylyltransferase from Shewanella amazonensis (strain ATCC BAA-1098 / SB2B).